The sequence spans 288 residues: 4-diphosphocytidyl-2-C-methyl-D-erythritol kinase (288 aa).

The active site involves Lys11. Pro100 to Ser110 is an ATP binding site. Residue Asp140 is part of the active site.

This sequence belongs to the GHMP kinase family. IspE subfamily.

The enzyme catalyses 4-CDP-2-C-methyl-D-erythritol + ATP = 4-CDP-2-C-methyl-D-erythritol 2-phosphate + ADP + H(+). It participates in isoprenoid biosynthesis; isopentenyl diphosphate biosynthesis via DXP pathway; isopentenyl diphosphate from 1-deoxy-D-xylulose 5-phosphate: step 3/6. Catalyzes the phosphorylation of the position 2 hydroxy group of 4-diphosphocytidyl-2C-methyl-D-erythritol. The polypeptide is 4-diphosphocytidyl-2-C-methyl-D-erythritol kinase (Wolbachia sp. subsp. Drosophila simulans (strain wRi)).